The primary structure comprises 375 residues: Citrate synthase (375 aa).

Active-site residues include His-266 and Asp-317.

It belongs to the citrate synthase family. Homohexamer.

It carries out the reaction oxaloacetate + acetyl-CoA + H2O = citrate + CoA + H(+). The protein operates within carbohydrate metabolism; tricarboxylic acid cycle; isocitrate from oxaloacetate: step 1/2. Allosterically inhibited by NADH. This is Citrate synthase (gltA) from Mycolicibacterium smegmatis (Mycobacterium smegmatis).